The primary structure comprises 499 residues: Myocyte-specific enhancer factor 2A (499 aa).

The 55-residue stretch at 3-57 (RKKIQITRIMDERNRQVTFTKRKFGLMKKAYELSVLCDCEIALIIFNSSNKLFQY) folds into the MADS-box domain. Lys4 is modified (N6-acetyllysine). Positions 58-86 (ASTDMDKVLLKYTEYNEPHESRTNSDIVE) form a DNA-binding region, mef2-type. Lys117 bears the N6-acetyllysine mark. Positions 173–185 (TSTTMLSPPQTTL) are enriched in low complexity. Residues 173–269 (TSTTMLSPPQ…GGGLGMNNRK (97 aa)) form a disordered region. A compositionally biased stretch (polar residues) spans 210-233 (TDLTVPNGAGTSPVGNGVWNSRAS). 4 positions are modified to N6-acetyllysine: Lys248, Lys253, Lys269, and Lys281. A required for interaction with MAPKs region spans residues 265–282 (MNNRKPDLRVVIPPSSKG). The tract at residues 288–295 (TEEDELEL) is beta domain. The span at 380–392 (VSGSQLSQGSNLS) shows a compositional bias: low complexity. Positions 380–499 (VSGSQLSQGS…KRMRMDTWVT (120 aa)) are disordered. At Lys402 the chain carries N6-acetyllysine; alternate. Residue Lys402 forms a Glycyl lysine isopeptide (Lys-Gly) (interchain with G-Cter in SUMO); alternate linkage. The segment covering 421–436 (QQPPQQPQPPQPPQQP) has biased composition (pro residues). Low complexity predominate over residues 445 to 458 (SPVDSLSSSSSSYD). Composition is skewed to basic and acidic residues over residues 459–469 (GSDREDPRSDF) and 480–499 (NSEDRESPSVKRMRMDTWVT).

Binds DNA as a homo- or heterodimer. Sumoylation on Lys-402 is enhanced by PIAS1 and represses transcriptional activity. Has no effect on nuclear location nor on DNA binding. Sumoylated by SUMO1 and, to a lesser extent by SUMO2 and SUMO3. In terms of processing, acetylation on Lys-402 activates transcriptional activity. Expressed in both embryonic and adult tissues with high expression in heart and skeletal muscle. Also expressed in gut, lung and brain of 15 dpc embryos and adults.

The protein resides in the nucleus. In terms of biological role, transcriptional activator which binds specifically to the MEF2 element, 5'-YTA[AT](4)TAR-3', found in numerous muscle-specific genes. Mediates cellular functions in skeletal and cardiac muscle development,. This chain is Myocyte-specific enhancer factor 2A (MEF2A), found in Gallus gallus (Chicken).